Here is a 1534-residue protein sequence, read N- to C-terminus: DNA polymerase alpha catalytic subunit (1534 aa).

Residues 1–12 show a composition bias toward low complexity; the sequence is MDEGSADAGASG. 3 disordered regions span residues 1–23, 96–141, and 864–905; these read MDEG…SEAV, THRT…LSAA, and FNST…GPSY. Over residues 116-125 the composition is skewed to basic residues; the sequence is RKRKQPRPQS. Residues 127–141 are compositionally biased toward low complexity; sequence RPPQQSAAAASLSAA. 2 stretches are compositionally biased toward basic and acidic residues: residues 864–882 and 889–898; these read FNST…RPDE and DEGHHVDQGK. Cys1340, Cys1343, Cys1383, Cys1386, Cys1422, Cys1427, Cys1448, and Cys1454 together coordinate Zn(2+). The CysA-type zinc-finger motif lies at 1340 to 1386; sequence CPSCSTTFDCPPVSSLIIGSSSGNVSNPNEGNDASINFWRRMRCPRC. The CysB motif signature appears at 1422 to 1451; it reads CDDEGCKYSTHSVNLRVMGDSERGTICPNY.

The protein belongs to the DNA polymerase type-B family.

The protein resides in the nucleus. It carries out the reaction DNA(n) + a 2'-deoxyribonucleoside 5'-triphosphate = DNA(n+1) + diphosphate. In terms of biological role, polymerase alpha in a complex with DNA primase is a replicative polymerase. The sequence is that of DNA polymerase alpha catalytic subunit from Oryza sativa subsp. japonica (Rice).